The following is a 103-amino-acid chain: Putative membrane protein insertion efficiency factor (103 aa).

Positions 68–103 are disordered; it reads HEGGYDPVPLAKQDAKPENNSESESLLNQPTETKSL. Residues 87 to 103 show a composition bias toward polar residues; that stretch reads NSESESLLNQPTETKSL.

It belongs to the UPF0161 family.

The protein localises to the cell inner membrane. Could be involved in insertion of integral membrane proteins into the membrane. The protein is Putative membrane protein insertion efficiency factor of Idiomarina loihiensis (strain ATCC BAA-735 / DSM 15497 / L2-TR).